Reading from the N-terminus, the 144-residue chain is Large ribosomal subunit protein uL15 (144 aa).

The disordered stretch occupies residues Met1–Arg60. Over residues Arg21 to Gly31 the composition is skewed to gly residues.

Belongs to the universal ribosomal protein uL15 family. Part of the 50S ribosomal subunit.

Its function is as follows. Binds to the 23S rRNA. This Hahella chejuensis (strain KCTC 2396) protein is Large ribosomal subunit protein uL15.